Reading from the N-terminus, the 563-residue chain is PTS system fructose-specific EIIB'BC component (563 aa).

2 PTS EIIB type-2 domains span residues 1 to 85 and 104 to 201; these read MKTL…KGHA and KRVV…KAVA. The Phosphocysteine intermediate; for EIIB activity role is filled by Cys112. Position 112 is a phosphocysteine; by EIIA (Cys112). One can recognise a PTS EIIC type-2 domain in the interval 226-561; it reads AYRHLLTGVS…KRPEVDAVAK (336 aa). Helical transmembrane passes span 236-256, 274-294, 304-324, 349-369, 382-402, 430-450, 463-483, 489-509, and 518-538; these read YMLP…AFGI, GGSA…FSIA, IGGM…IAGF, ILII…YLIG, WLQT…GGMM, MAAI…ATMV, GKAA…PFAA, VLPC…AIGA, and LFVL…VAII.

Its subcellular location is the cell inner membrane. The catalysed reaction is D-fructose(out) + N(pros)-phospho-L-histidyl-[protein] = D-fructose 1-phosphate(in) + L-histidyl-[protein]. Its function is as follows. The phosphoenolpyruvate-dependent sugar phosphotransferase system (sugar PTS), a major carbohydrate active transport system, catalyzes the phosphorylation of incoming sugar substrates concomitantly with their translocation across the cell membrane. The enzyme II FruAB PTS system is involved in fructose transport. The polypeptide is PTS system fructose-specific EIIB'BC component (Escherichia coli (strain K12)).